The sequence spans 276 residues: Undecaprenyl-diphosphatase (276 aa).

A run of 6 helical transmembrane segments spans residues 43-63, 85-105, 109-129, 184-204, 218-238, and 254-274; these read RAMAFNIIIQLGAILAVVWEF, INLLIAFLPAVVLGVIFADLI, LFNPITVATALVVGGLIMLWA, ATEFSFFLAMPTMVGAAVYSG, VFAIGFVTAFVFAMIAVKGLL, and IAFGLLILATWQFGWVDWTAA.

This sequence belongs to the UppP family.

It is found in the cell inner membrane. It carries out the reaction di-trans,octa-cis-undecaprenyl diphosphate + H2O = di-trans,octa-cis-undecaprenyl phosphate + phosphate + H(+). Functionally, catalyzes the dephosphorylation of undecaprenyl diphosphate (UPP). Confers resistance to bacitracin. The chain is Undecaprenyl-diphosphatase from Pseudomonas fluorescens (strain ATCC BAA-477 / NRRL B-23932 / Pf-5).